A 471-amino-acid polypeptide reads, in one-letter code: V-type ATP synthase beta chain (471 aa).

Belongs to the ATPase alpha/beta chains family.

Its function is as follows. Produces ATP from ADP in the presence of a proton gradient across the membrane. The V-type beta chain is a regulatory subunit. In Streptococcus pyogenes serotype M49 (strain NZ131), this protein is V-type ATP synthase beta chain.